Reading from the N-terminus, the 160-residue chain is Ribosome maturation factor RimP (160 aa).

This sequence belongs to the RimP family.

The protein resides in the cytoplasm. Functionally, required for maturation of 30S ribosomal subunits. The chain is Ribosome maturation factor RimP from Geobacter sp. (strain M21).